The following is a 68-amino-acid chain: DNA-directed RNA polymerase subunit omega (68 aa).

Belongs to the RNA polymerase subunit omega family. The RNAP catalytic core consists of 2 alpha, 1 beta, 1 beta' and 1 omega subunit. When a sigma factor is associated with the core the holoenzyme is formed, which can initiate transcription.

It catalyses the reaction RNA(n) + a ribonucleoside 5'-triphosphate = RNA(n+1) + diphosphate. Functionally, promotes RNA polymerase assembly. Latches the N- and C-terminal regions of the beta' subunit thereby facilitating its interaction with the beta and alpha subunits. The protein is DNA-directed RNA polymerase subunit omega of Nitrosospira multiformis (strain ATCC 25196 / NCIMB 11849 / C 71).